The sequence spans 167 residues: Biotin carboxyl carrier protein of acetyl-CoA carboxylase (167 aa).

The tract at residues S53–S91 is disordered. The segment covering D64 to T74 has biased composition (basic and acidic residues). Positions T75–S86 are enriched in low complexity. Residues G87–A163 form the Biotinyl-binding domain. N6-biotinyllysine is present on K129.

In terms of assembly, homodimer.

The protein operates within lipid metabolism; fatty acid biosynthesis. In terms of biological role, this protein is a component of the acetyl coenzyme A carboxylase complex; first, biotin carboxylase catalyzes the carboxylation of the carrier protein and then the transcarboxylase transfers the carboxyl group to form malonyl-CoA. The polypeptide is Biotin carboxyl carrier protein of acetyl-CoA carboxylase (accB) (Chlamydia pneumoniae (Chlamydophila pneumoniae)).